The sequence spans 75 residues: Exodeoxyribonuclease 7 small subunit (75 aa).

It belongs to the XseB family. As to quaternary structure, heterooligomer composed of large and small subunits.

Its subcellular location is the cytoplasm. It carries out the reaction Exonucleolytic cleavage in either 5'- to 3'- or 3'- to 5'-direction to yield nucleoside 5'-phosphates.. Its function is as follows. Bidirectionally degrades single-stranded DNA into large acid-insoluble oligonucleotides, which are then degraded further into small acid-soluble oligonucleotides. This is Exodeoxyribonuclease 7 small subunit from Chlamydia caviae (strain ATCC VR-813 / DSM 19441 / 03DC25 / GPIC) (Chlamydophila caviae).